A 352-amino-acid chain; its full sequence is NADP-dependent oxidoreductase RED1 (352 aa).

NADP(+) is bound by residues 166–169 (GAVG), lysine 192, tyrosine 208, asparagine 231, and 285–287 (FIV).

The protein belongs to the NADP-dependent oxidoreductase L4BD family.

The protein operates within mycotoxin biosynthesis. Its function is as follows. NADP-dependent oxidoreductase; part of the Tox1B locus, one of the 2 loci that mediate the biosynthesis of T-toxin, a family of linear polyketides 37 to 45 carbons in length, of which the major component is 41 carbons, and which leads to high virulence to maize. One of the PKSs (PKS1 or PKS2) could synthesize a precursor, used subsequently by the other PKS as starter unit, to add additional carbons. Variability in the length of the final carbon backbone C35-47 could be achieved by varying the number of condensation cycles, or use of different starter or extender units or might be due to decarboxylation of the penultimate product, catalyzed by DEC1. Additional proteins are required for the biosynthesis of T-toxin, including oxidoreductases RED1, RED2, RED3, LAM1 and OXI1, as well as esterase TOX9. The sequence is that of NADP-dependent oxidoreductase RED1 from Cochliobolus heterostrophus (strain C4 / ATCC 48331 / race T) (Southern corn leaf blight fungus).